The primary structure comprises 256 residues: F-actin-capping protein subunit beta (256 aa).

Residue methionine 1 is modified to N-acetylmethionine.

This sequence belongs to the F-actin-capping protein beta subunit family. As to quaternary structure, component of the F-actin capping complex, composed of a heterodimer of an alpha and a beta subunit.

The protein resides in the cytoplasm. The protein localises to the cytoskeleton. Functionally, F-actin-capping proteins bind in a Ca(2+)-independent manner to the fast growing ends of actin filaments (barbed end) thereby blocking the exchange of subunits at these ends. Unlike other capping proteins (such as gelsolin and severin), these proteins do not sever actin filaments. The polypeptide is F-actin-capping protein subunit beta (Arabidopsis thaliana (Mouse-ear cress)).